We begin with the raw amino-acid sequence, 909 residues long: Lon protease homolog 2, peroxisomal (909 aa).

Positions 1-230 (MAPVRAPTAR…KVIELLDRQV (230 aa)) constitute a Lon N-terminal domain. The tract at residues 249–269 (FPMDPDSTKPGKVKPPVKAPG) is disordered. ATP is bound at residue 463-470 (GPPGVGKT). Positions 706 to 893 (TSRPGIVTGL…WEAIRYVWPD (188 aa)) constitute a Lon proteolytic domain. Catalysis depends on residues Ser-799 and Lys-842. The Microbody targeting signal motif lies at 907 to 909 (SRL).

It belongs to the peptidase S16 family.

It is found in the peroxisome matrix. The protein localises to the cytoplasm. The catalysed reaction is Hydrolysis of proteins in presence of ATP.. In terms of biological role, ATP-dependent serine protease that mediates the selective degradation of misfolded and unassembled polypeptides in the peroxisomal matrix. Necessary for type 2 peroxisome targeting signal (PTS2)-containing protein processing and facilitates peroxisome matrix protein import. This Sordaria macrospora (strain ATCC MYA-333 / DSM 997 / K(L3346) / K-hell) protein is Lon protease homolog 2, peroxisomal.